Reading from the N-terminus, the 290-residue chain is MKFLRSVYAFCSSWVGTIIIVLLVIFFIAQAFIIPSRSMVGTLYEGDMLFVKKFSYGIPIPKIPWIELPVMPDFKNNGHLIEGDRPKRGEVVVFIPPHEKKSYYVKRNFAIGGDEVLFTNEGFYLHPFESGNDKDYISKHYPNALTKEFMGKIFVLNPYKSKHPGIHYQKDNETFHLMEQLATQGAEANISMQLIQMEGEKVFYKKINHDEFFMIGDNRDNSSDSRFWGSVAYKNIVGSPWFVYFSLSLKNSLEVDAENNPKKRYLVRWERMFKSVEGLEKIIKKEKATH.

The Cytoplasmic segment spans residues 1-13 (MKFLRSVYAFCSS). The chain crosses the membrane as a helical span at residues 14 to 34 (WVGTIIIVLLVIFFIAQAFII). Topologically, residues 35–290 (PSRSMVGTLY…KIIKKEKATH (256 aa)) are extracellular. Residues serine 38 and lysine 106 contribute to the active site.

Belongs to the peptidase S26 family.

The protein resides in the cell membrane. The enzyme catalyses Cleavage of hydrophobic, N-terminal signal or leader sequences from secreted and periplasmic proteins.. The sequence is that of Signal peptidase I (lepB) from Helicobacter pylori (strain J99 / ATCC 700824) (Campylobacter pylori J99).